A 130-amino-acid polypeptide reads, in one-letter code: Small ribosomal subunit protein uS11c (130 aa).

The protein belongs to the universal ribosomal protein uS11 family. In terms of assembly, part of the 30S ribosomal subunit.

Its subcellular location is the plastid. This chain is Small ribosomal subunit protein uS11c, found in Aneura mirabilis (Parasitic liverwort).